Here is a 171-residue protein sequence, read N- to C-terminus: Adenine phosphoribosyltransferase (171 aa).

This sequence belongs to the purine/pyrimidine phosphoribosyltransferase family. As to quaternary structure, homodimer.

It localises to the cytoplasm. The enzyme catalyses AMP + diphosphate = 5-phospho-alpha-D-ribose 1-diphosphate + adenine. The protein operates within purine metabolism; AMP biosynthesis via salvage pathway; AMP from adenine: step 1/1. In terms of biological role, catalyzes a salvage reaction resulting in the formation of AMP, that is energically less costly than de novo synthesis. The polypeptide is Adenine phosphoribosyltransferase (Syntrophotalea carbinolica (strain DSM 2380 / NBRC 103641 / GraBd1) (Pelobacter carbinolicus)).